Consider the following 283-residue polypeptide: Pantothenate synthetase (283 aa).

An ATP-binding site is contributed by Met30–His37. Catalysis depends on His37, which acts as the Proton donor. (R)-pantoate is bound at residue Gln61. Residue Gln61 coordinates beta-alanine. Gly147–Asp150 lines the ATP pocket. Gln153 contributes to the (R)-pantoate binding site. ATP-binding positions include Ile176 and Val184 to Arg187.

The protein belongs to the pantothenate synthetase family. In terms of assembly, homodimer.

It localises to the cytoplasm. The catalysed reaction is (R)-pantoate + beta-alanine + ATP = (R)-pantothenate + AMP + diphosphate + H(+). It functions in the pathway cofactor biosynthesis; (R)-pantothenate biosynthesis; (R)-pantothenate from (R)-pantoate and beta-alanine: step 1/1. Its function is as follows. Catalyzes the condensation of pantoate with beta-alanine in an ATP-dependent reaction via a pantoyl-adenylate intermediate. The polypeptide is Pantothenate synthetase (Pelodictyon phaeoclathratiforme (strain DSM 5477 / BU-1)).